A 740-amino-acid polypeptide reads, in one-letter code: Probable type IV piliation system protein DR_0774 (740 aa).

An N-terminal signal peptide occupies residues 1 to 20 (MNKRHALLLTAVLGMATAYA).

The protein belongs to the bacterial secretin family.

It is found in the cell envelope. Its function is as follows. Could be part of the type IV piliation system (T4P). May contribute at the cohesion between the S-layer and the outer membrane by forming oligomers. Could also be the main channel through which trafficking is managed. The protein is Probable type IV piliation system protein DR_0774 of Deinococcus radiodurans (strain ATCC 13939 / DSM 20539 / JCM 16871 / CCUG 27074 / LMG 4051 / NBRC 15346 / NCIMB 9279 / VKM B-1422 / R1).